Here is a 201-residue protein sequence, read N- to C-terminus: Probable GTP-binding protein EngB (201 aa).

The region spanning 22–195 (TQPEFAFAGK…WRCIEQFLEV (174 aa)) is the EngB-type G domain. Residues 30–37 (GKSNVGKS), 57–61 (GKTQT), 75–78 (DLPG), 142–145 (TKLD), and 174–176 (FSS) each bind GTP. The Mg(2+) site is built by Ser37 and Thr59.

Belongs to the TRAFAC class TrmE-Era-EngA-EngB-Septin-like GTPase superfamily. EngB GTPase family. Mg(2+) serves as cofactor.

Necessary for normal cell division and for the maintenance of normal septation. The protein is Probable GTP-binding protein EngB of Lachnoclostridium phytofermentans (strain ATCC 700394 / DSM 18823 / ISDg) (Clostridium phytofermentans).